A 251-amino-acid polypeptide reads, in one-letter code: Chloride intracellular channel protein 5 (251 aa).

Residues Met-1–Pro-98 form a required for insertion into the membrane region. The short motif at Cys-32–Ser-35 is the G-site element. The helical transmembrane segment at Phe-34–Val-54 threads the bilayer. The GST C-terminal domain occupies Tyr-101 to Tyr-241.

Belongs to the chloride channel CLIC family. Component of a multimeric complex consisting of several cytoskeletal proteins, including actin, ezrin, alpha-actinin, gelsolin, and IQGAP1. Interacts with AKAP9. Interacts with TPRN. TPRN, CLIC5 and PTPQR form concentric rings at the base of stereocilia and may form a complex. Interacts with EZR, MYO6 and RDX; the proteins may work together as a complex to stabilize linkages between the plasma membrane and subjacent actin cytoskeleton at the stereocilium base. In terms of tissue distribution, detected in lung and inner ear. Detected in embryonic cochlea, on microvilli-covered apical surfaces of interdental cells, columnar cells of Kolliker's organ, and on stereocilia of inner and outer hair cells (at protein level). Also detected in the eye, where it localizes to lens fiber cells in the lens epithelium (at protein level).

It is found in the golgi apparatus. Its subcellular location is the cytoplasm. It localises to the cytoskeleton. The protein localises to the microtubule organizing center. The protein resides in the centrosome. It is found in the cell cortex. Its subcellular location is the membrane. It localises to the apical cell membrane. The protein localises to the mitochondrion. The protein resides in the cell projection. It is found in the stereocilium. The enzyme catalyses Na(+)(in) = Na(+)(out). The catalysed reaction is K(+)(in) = K(+)(out). It catalyses the reaction chloride(in) = chloride(out). Inhibited by F-actin. In terms of biological role, in the soluble state, catalyzes glutaredoxin-like thiol disulfide exchange reactions with reduced glutathione as electron donor. Can insert into membranes and form non-selective ion channels almost equally permeable to Na(+), K(+) and Cl(-). Required for normal hearing. Necessary for the formation of stereocilia in the inner ear and normal development of the organ of Corti. Required for the proper localization of PTPRQ and RDX to the stereocilium base during postnatal maturation of hair bundles. Can insert into membranes and form poorly selective ion channels that may also transport chloride ions. Required for the development and/or maintenance of the proper glomerular endothelial cell and podocyte architecture. Plays a role in formation of the lens suture in the eye, which is important for normal optical properties of the lens. This Mus musculus (Mouse) protein is Chloride intracellular channel protein 5 (Clic5).